A 261-amino-acid polypeptide reads, in one-letter code: MTIQSLIVTIGSGGLVGFALGLLGGGGSILATPLLLYVVGVTNPHIAIGTSAVAVSVNAYANLIAHAWKGHVWWRSAVIFALVGTLGAFLGSSIGMLIDGQRLLLLFGLLMAMVGLLMLRGRATAPRAEHHQTVLRMCMKTSSVAILTGAASGFFGIGGGFLIVPALIFATRMPTINAIGSSLLAVGSFGLITTLNYARHDLVNWTIAMEFIVGGITGGGLGTLLATRLSASKHLLNRVFGLIVIAVAIYVIWRSWASLVA.

8 consecutive transmembrane segments (helical) span residues 6–26 (LIVT…LGGG), 45–64 (HIAI…ANLI), 78–98 (VIFA…GMLI), 99–119 (DGQR…LLML), 150–170 (AASG…LIFA), 175–195 (TINA…ITTL), 205–225 (WTIA…GTLL), and 239–259 (VFGL…WASL).

The protein belongs to the 4-toluene sulfonate uptake permease (TSUP) (TC 2.A.102) family.

The protein localises to the cell membrane. In Xylella fastidiosa (strain Temecula1 / ATCC 700964), this protein is Probable membrane transporter protein PD_1894.